A 222-amino-acid chain; its full sequence is 7-cyano-7-deazaguanine synthase (222 aa).

7 to 17 (LSGGLDSSTVL) is an ATP binding site. Zn(2+)-binding residues include cysteine 191, cysteine 199, cysteine 202, and cysteine 205.

Belongs to the QueC family. Requires Zn(2+) as cofactor.

It carries out the reaction 7-carboxy-7-deazaguanine + NH4(+) + ATP = 7-cyano-7-deazaguanine + ADP + phosphate + H2O + H(+). It functions in the pathway purine metabolism; 7-cyano-7-deazaguanine biosynthesis. Catalyzes the ATP-dependent conversion of 7-carboxy-7-deazaguanine (CDG) to 7-cyano-7-deazaguanine (preQ(0)). The chain is 7-cyano-7-deazaguanine synthase from Trichodesmium erythraeum (strain IMS101).